We begin with the raw amino-acid sequence, 252 residues long: 3-dehydroquinate dehydratase (252 aa).

Residues 46-48 (EWR) and Arg-82 contribute to the 3-dehydroquinate site. His-143 acts as the Proton donor/acceptor in catalysis. Lys-170 acts as the Schiff-base intermediate with substrate in catalysis. The 3-dehydroquinate site is built by Arg-212, Ser-231, and Gln-235.

It belongs to the type-I 3-dehydroquinase family. In terms of assembly, homodimer.

It catalyses the reaction 3-dehydroquinate = 3-dehydroshikimate + H2O. It participates in metabolic intermediate biosynthesis; chorismate biosynthesis; chorismate from D-erythrose 4-phosphate and phosphoenolpyruvate: step 3/7. In terms of biological role, involved in the third step of the chorismate pathway, which leads to the biosynthesis of aromatic amino acids. Catalyzes the cis-dehydration of 3-dehydroquinate (DHQ) and introduces the first double bond of the aromatic ring to yield 3-dehydroshikimate. The sequence is that of 3-dehydroquinate dehydratase from Listeria monocytogenes serotype 4b (strain CLIP80459).